A 122-amino-acid chain; its full sequence is Truncated CrmB protein (122 aa).

In terms of biological role, the protein is truncated in this strain and presumably inactive. It has similarities with variola virus CrmB, but the product is inactivated due to several premature stop codons. The chain is Truncated CrmB protein (OPG002) from Bos taurus (Bovine).